A 472-amino-acid chain; its full sequence is Sarcalumenin (472 aa).

The N-terminal stretch at Met-1 to Ala-19 is a signal peptide. The 242-residue stretch at Ile-89 to Ala-330 folds into the Dynamin-type G domain. A G1 motif region spans residues Gly-99–Ser-106. A glycan (N-linked (GlcNAc...) asparagine) is linked at Ser-102. The segment at Glu-127–Pro-128 is G2 motif. A G3 motif region spans residues Asp-189–Gly-192. Residues Asn-254–Asp-257 are G4 motif. Position 277 (Pro-277) is a region of interest, G5 motif. 2 N-linked (GlcNAc...) asparagine glycosylation sites follow: Asn-280 and Asn-388.

It belongs to the TRAFAC class dynamin-like GTPase superfamily. Dynamin/Fzo/YdjA family. N-glycosylated. As to expression, detected in skeletal muscle.

It is found in the sarcoplasmic reticulum lumen. Its subcellular location is the sarcoplasmic reticulum membrane. The sequence is that of Sarcalumenin (SRL) from Oryctolagus cuniculus (Rabbit).